The primary structure comprises 510 residues: Ectonucleoside triphosphate diphosphohydrolase 1 (510 aa).

The Cytoplasmic segment spans residues 1–16 (MEDIKDSKVKRFCSKN). Residues 17–37 (ILIILGFTSILAVIALIAVGL) form a helical membrane-spanning segment. Topologically, residues 38-478 (TQNKPLPENV…SPPLPHSTYI (441 aa)) are extracellular. Asn-73 carries N-linked (GlcNAc...) asparagine glycosylation. A disulfide bridge links Cys-84 with Cys-108. Residue Glu-174 is the Proton acceptor of the active site. Residues Asn-226, Asn-291, and Asn-333 are each glycosylated (N-linked (GlcNAc...) asparagine). Intrachain disulfides connect Cys-254–Cys-300 and Cys-281–Cys-324. 2 disulfides stabilise this stretch: Cys-337–Cys-342 and Cys-391–Cys-414. N-linked (GlcNAc...) asparagine glycosylation is found at Asn-428 and Asn-457. The helical transmembrane segment at 479-499 (GLMVLFSLLLVAVAITGLFIY) threads the bilayer. At 500–510 (SKPSYFWKEAV) the chain is on the cytoplasmic side.

It belongs to the GDA1/CD39 NTPase family. In terms of assembly, homodimer; disulfide-linked. The cofactor is Ca(2+). Mg(2+) serves as cofactor. N-glycosylated. In terms of processing, the N-terminus is blocked. Post-translationally, palmitoylated on Cys-13; which is required for caveola targeting.

The protein localises to the membrane. Its subcellular location is the caveola. It catalyses the reaction a ribonucleoside 5'-triphosphate + 2 H2O = a ribonucleoside 5'-phosphate + 2 phosphate + 2 H(+). The enzyme catalyses a ribonucleoside 5'-triphosphate + H2O = a ribonucleoside 5'-diphosphate + phosphate + H(+). It carries out the reaction a ribonucleoside 5'-diphosphate + H2O = a ribonucleoside 5'-phosphate + phosphate + H(+). The catalysed reaction is ATP + 2 H2O = AMP + 2 phosphate + 2 H(+). It catalyses the reaction ATP + H2O = ADP + phosphate + H(+). The enzyme catalyses ADP + H2O = AMP + phosphate + H(+). It carries out the reaction CTP + 2 H2O = CMP + 2 phosphate + 2 H(+). The catalysed reaction is CTP + H2O = CDP + phosphate + H(+). It catalyses the reaction CDP + H2O = CMP + phosphate + H(+). The enzyme catalyses GTP + 2 H2O = GMP + 2 phosphate + 2 H(+). It carries out the reaction GTP + H2O = GDP + phosphate + H(+). The catalysed reaction is GDP + H2O = GMP + phosphate + H(+). It catalyses the reaction ITP + 2 H2O = IMP + 2 phosphate + 2 H(+). The enzyme catalyses ITP + H2O = IDP + phosphate + H(+). It carries out the reaction IDP + H2O = IMP + phosphate + H(+). The catalysed reaction is UTP + 2 H2O = UMP + 2 phosphate + 2 H(+). It catalyses the reaction UTP + H2O = UDP + phosphate + H(+). The enzyme catalyses UDP + H2O = UMP + phosphate + H(+). In terms of biological role, catalyzes the hydrolysis of both di- and triphosphate nucleotides (NDPs and NTPs) and hydrolyze NTPs to nucleotide monophosphates (NMPs) in two distinct successive phosphate-releasing steps, with NDPs as intermediates and participates in the regulation of extracellular levels of nucleotides. By hydrolyzing proinflammatory ATP and platelet-activating ADP to AMP, it blocks platelet aggregation and supports blood flow. The protein is Ectonucleoside triphosphate diphosphohydrolase 1 of Mus musculus (Mouse).